The primary structure comprises 286 residues: MGREVVEVLMDRNADVSSARVHVAPKIAAEETDEEFEVKECTEEKSLSENAPNVGSAERVGAQKSPKTRNGNAKVSKQDAPLLAVRKPLQPENKKHIDDEDNCSIASSVATSMRMGKSGLTYGSAPTFRSAQRAEKRKEYYQKLEEKNQALEAERNELEQRQKDEQEAALKQLRKNLKFKAKPVPNFYYEAPPAKPELKKLPLTRPKSPKLILSRRKSFSDAVSSSSREEILKTVSNRNRHSTGTVQNKDDDHRNKNTNAAHDSPRVRSGKGKSGLKPVNESSEEA.

The interval 31 to 101 is disordered; it reads ETDEEFEVKE…ENKKHIDDED (71 aa). T32 is modified (phosphothreonine). Residues 38–47 are compositionally biased toward basic and acidic residues; it reads VKECTEEKSL. Positions 131 to 182 form a coiled coil; sequence AQRAEKRKEYYQKLEEKNQALEAERNELEQRQKDEQEAALKQLRKNLKFKAK. The segment at 186-286 is disordered; sequence NFYYEAPPAK…KPVNESSEEA (101 aa). The segment covering 234–247 has biased composition (polar residues); sequence TVSNRNRHSTGTVQ.

It belongs to the TPX2 family.

The protein localises to the cytoplasm. It localises to the cytoskeleton. Functionally, microtubule-associated protein (MAP) that regulates the orientation of interphase cortical microtubules. Modulates both rotational polarity and anisotropic cell expansion during organ growth. Promotes clockwise root and etiolated hypocotyls coiling, clockwise leaf curling, but left-handed petiole twisting. The protein is Protein WVD2-like 1 (WDL1) of Arabidopsis thaliana (Mouse-ear cress).